The sequence spans 112 residues: MALSQYLFGIKGEDIACEYLKNKDFEILERNFHSKFGEIDIIAKKDKILHFIEVKSTQGNYEVAYRLDGKKYNKIIKTIEYYFMKHKSNENFQLDLLCVYKDDIKLLENISY.

It belongs to the UPF0102 family.

The polypeptide is UPF0102 protein Cla_1413 (Campylobacter lari (strain RM2100 / D67 / ATCC BAA-1060)).